The following is a 119-amino-acid chain: MVKLAFPRELRLLTPKHFTYVFQQPQRASSPEITILGRPNELGHPRIGLTIAKKNVKRAHERNRIKRLARESFRLNQHELPPMDFVVLVRKGVAELDNRALTEALGKLWRRHCRLARAS.

Belongs to the RnpA family. In terms of assembly, consists of a catalytic RNA component (M1 or rnpB) and a protein subunit.

The catalysed reaction is Endonucleolytic cleavage of RNA, removing 5'-extranucleotides from tRNA precursor.. RNaseP catalyzes the removal of the 5'-leader sequence from pre-tRNA to produce the mature 5'-terminus. It can also cleave other RNA substrates such as 4.5S RNA. The protein component plays an auxiliary but essential role in vivo by binding to the 5'-leader sequence and broadening the substrate specificity of the ribozyme. This Photorhabdus laumondii subsp. laumondii (strain DSM 15139 / CIP 105565 / TT01) (Photorhabdus luminescens subsp. laumondii) protein is Ribonuclease P protein component.